A 340-amino-acid polypeptide reads, in one-letter code: Terpene synthase 29 (340 aa).

5 residues coordinate Mg(2+): Asp132, Glu197, Asn257, Ser261, and Glu265. The DDXXXXD motif signature appears at Asp132–Glu138. Residues Asn257 to Glu265 carry the NSE/DTE motif motif.

It belongs to the trichodiene synthase family. Mg(2+) serves as cofactor.

Its function is as follows. Terpene cyclase that catalyzes the cyclization of farnesyl diphosphate (FPP) to a single major terpene scaffold whose chemical structure is still unknown. The chain is Terpene synthase 29 from Postia placenta (strain ATCC 44394 / Madison 698-R) (Brown rot fungus).